A 321-amino-acid polypeptide reads, in one-letter code: Methionyl-tRNA formyltransferase (321 aa).

Position 111–114 (111–114 (GLLP)) interacts with (6S)-5,6,7,8-tetrahydrofolate.

Belongs to the Fmt family.

The catalysed reaction is L-methionyl-tRNA(fMet) + (6R)-10-formyltetrahydrofolate = N-formyl-L-methionyl-tRNA(fMet) + (6S)-5,6,7,8-tetrahydrofolate + H(+). Its function is as follows. Attaches a formyl group to the free amino group of methionyl-tRNA(fMet). The formyl group appears to play a dual role in the initiator identity of N-formylmethionyl-tRNA by promoting its recognition by IF2 and preventing the misappropriation of this tRNA by the elongation apparatus. This Chlamydia pneumoniae (Chlamydophila pneumoniae) protein is Methionyl-tRNA formyltransferase.